The chain runs to 152 residues: Endoribonuclease YbeY (152 aa).

Zn(2+) contacts are provided by H118, H122, and H128.

Belongs to the endoribonuclease YbeY family. Zn(2+) is required as a cofactor.

It is found in the cytoplasm. In terms of biological role, single strand-specific metallo-endoribonuclease involved in late-stage 70S ribosome quality control and in maturation of the 3' terminus of the 16S rRNA. The chain is Endoribonuclease YbeY from Lacticaseibacillus paracasei (strain ATCC 334 / BCRC 17002 / CCUG 31169 / CIP 107868 / KCTC 3260 / NRRL B-441) (Lactobacillus paracasei).